A 363-amino-acid polypeptide reads, in one-letter code: MKYKLVLAVAVLVFSLPSQAERIKDIANVQGVRSNQLIGYGLVVGLPGTGEKTSYTEQTFMTMLKNFGINLPDNVKPKIKNVAVVAVHADMPAFIKPGQDLDVTVSSLGEAKSLRGGTLLQTFLKGVDGNVYAIAQGSLVVSGFSADGLDGSKVIQNTPTVGRIPNGAIVERSVATPFSTGDYLTFNLRRSDFSTAQRMADAINELLGPDMARPLDATSVQVSAPRDVSQRVSFLATLENLDVIPAEESAKVIVNSRTGTIVVGQNVRLLPAAITHGGMTVTIAEATQVSQPNALANGQTTVTSNSTITATESDRRMFMFNPGTTLDELVRAVNLVGAAPSDVLAILEALKVAGALHGELIII.

The N-terminal stretch at 1 to 20 is a signal peptide; sequence MKYKLVLAVAVLVFSLPSQA.

This sequence belongs to the FlgI family. The basal body constitutes a major portion of the flagellar organelle and consists of four rings (L,P,S, and M) mounted on a central rod.

Its subcellular location is the periplasm. It localises to the bacterial flagellum basal body. Assembles around the rod to form the L-ring and probably protects the motor/basal body from shearing forces during rotation. The chain is Flagellar P-ring protein from Shewanella baltica (strain OS223).